Here is a 157-residue protein sequence, read N- to C-terminus: Crossover junction endodeoxyribonuclease RuvC (157 aa).

Residues Asp7, Glu67, and Asp140 contribute to the active site. Residues Asp7, Glu67, and Asp140 each contribute to the Mg(2+) site.

Belongs to the RuvC family. Homodimer which binds Holliday junction (HJ) DNA. The HJ becomes 2-fold symmetrical on binding to RuvC with unstacked arms; it has a different conformation from HJ DNA in complex with RuvA. In the full resolvosome a probable DNA-RuvA(4)-RuvB(12)-RuvC(2) complex forms which resolves the HJ. It depends on Mg(2+) as a cofactor.

It localises to the cytoplasm. It catalyses the reaction Endonucleolytic cleavage at a junction such as a reciprocal single-stranded crossover between two homologous DNA duplexes (Holliday junction).. Its function is as follows. The RuvA-RuvB-RuvC complex processes Holliday junction (HJ) DNA during genetic recombination and DNA repair. Endonuclease that resolves HJ intermediates. Cleaves cruciform DNA by making single-stranded nicks across the HJ at symmetrical positions within the homologous arms, yielding a 5'-phosphate and a 3'-hydroxyl group; requires a central core of homology in the junction. The consensus cleavage sequence is 5'-(A/T)TT(C/G)-3'. Cleavage occurs on the 3'-side of the TT dinucleotide at the point of strand exchange. HJ branch migration catalyzed by RuvA-RuvB allows RuvC to scan DNA until it finds its consensus sequence, where it cleaves and resolves the cruciform DNA. This chain is Crossover junction endodeoxyribonuclease RuvC, found in Rickettsia conorii (strain ATCC VR-613 / Malish 7).